The chain runs to 424 residues: Enolase (424 aa).

Glutamine 163 contacts (2R)-2-phosphoglycerate. Catalysis depends on glutamate 204, which acts as the Proton donor. Mg(2+)-binding residues include aspartate 241, glutamate 284, and aspartate 311. Residues lysine 336, arginine 365, serine 366, and lysine 387 each coordinate (2R)-2-phosphoglycerate. Lysine 336 (proton acceptor) is an active-site residue.

This sequence belongs to the enolase family. Requires Mg(2+) as cofactor.

Its subcellular location is the cytoplasm. The protein resides in the secreted. It localises to the cell surface. It carries out the reaction (2R)-2-phosphoglycerate = phosphoenolpyruvate + H2O. It functions in the pathway carbohydrate degradation; glycolysis; pyruvate from D-glyceraldehyde 3-phosphate: step 4/5. Catalyzes the reversible conversion of 2-phosphoglycerate (2-PG) into phosphoenolpyruvate (PEP). It is essential for the degradation of carbohydrates via glycolysis. The sequence is that of Enolase from Dictyoglomus thermophilum (strain ATCC 35947 / DSM 3960 / H-6-12).